A 237-amino-acid polypeptide reads, in one-letter code: HTH-type transcriptional regulator GmuR (237 aa).

The HTH gntR-type domain occupies 1–69; that stretch reads MNKYEIIANE…RGHGTFIIQS (69 aa). Positions 29–48 form a DNA-binding region, H-T-H motif; that stretch reads EVSLAKEFNSSRMTMKRALD.

The protein localises to the cytoplasm. Transcriptional repressor of the gmuBACDREFG operon which is involved in the uptake and degradation of glucomannan. This Bacillus subtilis (strain 168) protein is HTH-type transcriptional regulator GmuR (gmuR).